The following is a 257-amino-acid chain: Type 2 phosphatidylinositol 4,5-bisphosphate 4-phosphatase (257 aa).

Positions 1–10 (MAADGVDERS) are enriched in basic and acidic residues. The tract at residues 1-34 (MAADGVDERSPLLSASHSGSVTPTAPPYLQDSSP) is disordered. The segment covering 13-23 (LSASHSGSVTP) has biased composition (polar residues). Position 22 is a phosphothreonine (Thr22). Ser33 bears the Phosphoserine mark. Residue Cys107 is part of the active site. A CX5R motif motif is present at residues 107–113 (CKDTSRR). The next 2 helical transmembrane spans lie at 192-212 (CCAYITIGMMCIFIGIGLTVG) and 227-247 (WAIAYLLGLVCLIRACYWGAI).

Its subcellular location is the late endosome membrane. The protein resides in the lysosome membrane. The protein localises to the cytoplasmic vesicle. It localises to the phagosome membrane. It is found in the cell membrane. The catalysed reaction is a 1,2-diacyl-sn-glycero-3-phospho-(1D-myo-inositol-4,5-bisphosphate) + H2O = a 1,2-diacyl-sn-glycero-3-phospho-(1D-myo-inositol-5-phosphate) + phosphate. In terms of biological role, catalyzes the hydrolysis of phosphatidylinositol-4,5-bisphosphate (PtdIns-4,5-P2) to phosphatidylinositol-4-phosphate (PtdIns-4-P). Does not hydrolyze phosphatidylinositol 3,4,5-trisphosphate, phosphatidylinositol 3,4-bisphosphate, inositol 3,5-bisphosphate, inositol 3,4-bisphosphate, phosphatidylinositol 5-monophosphate, phosphatidylinositol 4-monophosphate and phosphatidylinositol 3-monophosphate. Negatively regulates the phagocytosis of large particles by reducing phagosomal phosphatidylinositol 4,5-bisphosphate accumulation during cup formation. The sequence is that of Type 2 phosphatidylinositol 4,5-bisphosphate 4-phosphatase from Bos taurus (Bovine).